A 1188-amino-acid chain; its full sequence is MARQDETDCKKLDSNSAFLPLCITSYRSKDEAEKLVSCLHHEGSYFLCFSYGLYTGTSNELKAKVEFALDGPFVVNYATVPMFMSASFCHLLMFNDGSIKGFKCENNKFEIIYDSNVAPKLDTISLLTSSWLNASFEGVLYTCNKNISYDSDLHTLCTTIYSFDFREGIVERFYATDGEEIISFDFISREDLLDDATCTGKSHVYFLCLLKSCYSENLFLKEYNLAGKHGSRKFDLNEYRQYNLLPICDNEFCYMKVVCGHTIVVLTTNYTQIINIKASGLTNGAFFNNKGLPNVENYQFLKDSYDVIYERSVILLTISDVYANKYTAKIHTRSLHRDHVLKELQWTKERVFKPPKHDLCDVILQLPREKYIAVTRINGVNFISKDHRGSKLEKVKSGPAYTNKVYLASQVIGNKGTDIDSLLLGGSFNSRRGFLEKKILVYDKTLFKLVTSSKALVENVTDFWVTDLALNGGDEFAYESGGLIYKNGIFLMDEPYDYGLFVSRTGKVLKAGMDGSTGEFRQVDFLQSNHNSSTMFCYPVQNSKLRISILEAKSGFLRKKEEFFIHGLNSKESIVSCFSDGAEKYLFVIYLDGVFSVWNANQKKVATSHPDYSFIAYDQLIKISWLSKKHKHDSIYVIASSYTGCVRVYKSESNFLRVDLEIHSLYDQKLELLDTIPSLPLVFLYNDKEIILLNLQNMSYGCIQLGLVPRRMRIRPGKALFSLCVLDYDSRISIFEFGSTFYREGFTKQMTSLKPQLENHIFYLPSIPVELYTVPNNLNQAVVCLVDSNSRQYKLMLFNYASMKAVSTFSFSDEKYLHAVVKPLWPEQNSIYLSQRPFYGNKFVVCLGVGEKRTKFWLFEIRNNNITQLYANYLEDCIFSVFIYYECNLVLFSGDSGIAAYKINMLKEGAEILEAYSFPALSSINHIGLPAYMSGDYLVQFEILRDFLRTRFPIRTSIVYPSEYPECPYLGFKRLGSITQVATKIIPKKLREPKNDCLASDKNYLLGRLSDLSCATLKYSNRSYVATIGIDNTLTIYEDSKLSVDKGGLAMPYLKIRLPNKIISLAAIPDGFQNLQICPNFNSQRLEGVIPLFLLCGTEGQIYIISEFIGELWMRTLHDYKKIKLECKRAFRRSEKSMRNVTKQYSVSKETGINESGFDELARNSKRRHIDHSPYKTIDFFDPVKLKR.

A run of 3 helical transmembrane segments spans residues 73-93 (FVVN…HLLM), 878-898 (IFSV…DSGI), and 1089-1109 (VIPL…SEFI).

The protein resides in the membrane. This is an uncharacterized protein from Saccharomyces cerevisiae (strain ATCC 204508 / S288c) (Baker's yeast).